Here is a 120-residue protein sequence, read N- to C-terminus: Membrane-anchored ubiquitin-fold protein 5 (120 aa).

Residues 7 to 72 (IELKFRLADG…ILENNKTLSE (66 aa)) form the Ubiquitin-like domain. A lipid anchor (S-palmitoyl cysteine) is attached at C115. C117 bears the Cysteine methyl ester mark. C117 carries the S-geranylgeranyl cysteine lipid modification. The propeptide at 118–120 (CIL) is removed in mature form.

In terms of tissue distribution, ubiquitous.

The protein localises to the cell membrane. Functionally, may serve as docking site to facilitate the association of other proteins to the plasma membrane. This Arabidopsis thaliana (Mouse-ear cress) protein is Membrane-anchored ubiquitin-fold protein 5 (MUB5).